Reading from the N-terminus, the 425-residue chain is Dual-specificity RNA methyltransferase RlmN (425 aa).

Catalysis depends on glutamate 136, which acts as the Proton acceptor. Positions 142–389 constitute a Radical SAM core domain; that stretch reads GDDRGTLCVS…VRTPRGRDIL (248 aa). Cysteines 149 and 392 form a disulfide. Residues cysteine 156, cysteine 160, and cysteine 163 each contribute to the [4Fe-4S] cluster site. S-adenosyl-L-methionine contacts are provided by residues 218 to 219, serine 250, 272 to 274, and asparagine 349; these read GE and SLH. The active-site S-methylcysteine intermediate is the cysteine 392.

The protein belongs to the radical SAM superfamily. RlmN family. [4Fe-4S] cluster is required as a cofactor.

The protein localises to the cytoplasm. It catalyses the reaction adenosine(2503) in 23S rRNA + 2 reduced [2Fe-2S]-[ferredoxin] + 2 S-adenosyl-L-methionine = 2-methyladenosine(2503) in 23S rRNA + 5'-deoxyadenosine + L-methionine + 2 oxidized [2Fe-2S]-[ferredoxin] + S-adenosyl-L-homocysteine. The enzyme catalyses adenosine(37) in tRNA + 2 reduced [2Fe-2S]-[ferredoxin] + 2 S-adenosyl-L-methionine = 2-methyladenosine(37) in tRNA + 5'-deoxyadenosine + L-methionine + 2 oxidized [2Fe-2S]-[ferredoxin] + S-adenosyl-L-homocysteine. In terms of biological role, specifically methylates position 2 of adenine 2503 in 23S rRNA and position 2 of adenine 37 in tRNAs. m2A2503 modification seems to play a crucial role in the proofreading step occurring at the peptidyl transferase center and thus would serve to optimize ribosomal fidelity. This Methylorubrum populi (strain ATCC BAA-705 / NCIMB 13946 / BJ001) (Methylobacterium populi) protein is Dual-specificity RNA methyltransferase RlmN.